Reading from the N-terminus, the 203-residue chain is Urease accessory protein UreG (203 aa).

Residue 14-21 (GPVGSGKT) participates in GTP binding.

This sequence belongs to the SIMIBI class G3E GTPase family. UreG subfamily. Homodimer. UreD, UreF and UreG form a complex that acts as a GTP-hydrolysis-dependent molecular chaperone, activating the urease apoprotein by helping to assemble the nickel containing metallocenter of UreC. The UreE protein probably delivers the nickel.

It is found in the cytoplasm. Facilitates the functional incorporation of the urease nickel metallocenter. This process requires GTP hydrolysis, probably effectuated by UreG. This Agrobacterium fabrum (strain C58 / ATCC 33970) (Agrobacterium tumefaciens (strain C58)) protein is Urease accessory protein UreG.